The chain runs to 452 residues: Pre-mRNA-splicing factor prp46 (452 aa).

Over residues 61–70 the composition is skewed to low complexity; the sequence is AAKQAQAAAA. Residues 61–129 form a disordered region; the sequence is AAKQAQAAAA…SATRQQPPEW (69 aa). The span at 114–125 shows a compositional bias: polar residues; that stretch reads SLIQRPSATRQQ. WD repeat units follow at residues 141–180, 183–222, 225–264, 267–308, 310–349, 350–388, and 399–438; these read GHLG…LRLT, GHIS…VIRH, GHLS…NIHV, GHTG…GVLT, HKKG…QNFE, GHNA…RYQT, and EAEA…TPET. Residues 432–452 are disordered; that stretch reads DQATPETHPVTWAPTLGRQRY.

Belongs to the WD repeat PRL1/PRL2 family. As to quaternary structure, associated with the spliceosome.

The protein resides in the cytoplasm. The protein localises to the nucleus. In terms of biological role, involved in pre-mRNA splicing and required for cell cycle progression at G2/M. This Emericella nidulans (strain FGSC A4 / ATCC 38163 / CBS 112.46 / NRRL 194 / M139) (Aspergillus nidulans) protein is Pre-mRNA-splicing factor prp46 (prp46).